The following is a 352-amino-acid chain: Pejvakin (352 aa).

It belongs to the gasdermin family. In terms of assembly, interacts with MAP1LC3B; interaction is direct. Interacts with IQGAP1. Interacts with ROCK2. Interacts with TRIOBP.

Its subcellular location is the peroxisome membrane. It is found in the cell projection. The protein resides in the cilium. Functionally, peroxisome-associated protein required to protect auditory hair cells against noise-induced damage. Acts by regulating noise-induced peroxisome proliferation in auditory hair cells and neurons, and promoting autophagic degradation of damaged peroxisomes (pexophagy). Noise overexposure increases reactive oxygen species (ROS) levels, causing oxidative damage to auditory hair cells and resulting in hearing loss. PJVK acts as a ROS sensor that recruits the autophagy machinery to trigger pexophagy of peroxisomes damaged by oxidative stress. In addition to pexophagy, also required to promote peroxisome proliferation in response to sound overstimulation. The chain is Pejvakin from Homo sapiens (Human).